The following is a 120-amino-acid chain: Small cysteine and glycine repeat-containing protein 2 (120 aa).

Residues 4-104 form a 19 X 2 AA repeats of CG region; it reads CGCGGCGGCG…TCHSCGCGCG (101 aa).

Belongs to the KRTAP type 28 family.

Its function is as follows. In the hair cortex, hair keratin intermediate filaments are embedded in an interfilamentous matrix, consisting of hair keratin-associated proteins (KRTAP), which are essential for the formation of a rigid and resistant hair shaft through their extensive disulfide bond cross-linking with abundant cysteine residues of hair keratins. The matrix proteins include the high-sulfur and high-glycine-tyrosine keratins. This is Small cysteine and glycine repeat-containing protein 2 from Homo sapiens (Human).